Here is a 194-residue protein sequence, read N- to C-terminus: HTH-type transcriptional regulator BetI (194 aa).

In terms of domain architecture, HTH tetR-type spans 8–68 (EIRRAQLIDA…ATMRHVLRDL (61 aa)). A DNA-binding region (H-T-H motif) is located at residues 31-50 (TLASVAQRANISTGIVSHYF).

The protein operates within amine and polyamine biosynthesis; betaine biosynthesis via choline pathway [regulation]. Its function is as follows. Repressor involved in the biosynthesis of the osmoprotectant glycine betaine. It represses transcription of the choline transporter BetT and the genes of BetAB involved in the synthesis of glycine betaine. This is HTH-type transcriptional regulator BetI from Burkholderia lata (strain ATCC 17760 / DSM 23089 / LMG 22485 / NCIMB 9086 / R18194 / 383).